Here is a 46-residue protein sequence, read N- to C-terminus: Myoregulin (46 aa).

At 1-21 the chain is on the cytoplasmic side; sequence MTGKNWILISTTTPKSLEDEI. The chain crosses the membrane as a helical span at residues 22–42; the sequence is VGRLLKILFVIFVDLISIIYV. Residues 43–46 lie on the Lumenal side of the membrane; that stretch reads VITS.

As to quaternary structure, homooligomer. Monomer. Interacts with ATP2A1/SERCA1. Interacts as a monomer with ATP2A2/SERCA2; the interaction inhibits ATP2A2 activity.

It is found in the sarcoplasmic reticulum membrane. Inhibits the activity of ATP2A1/SERCA1 ATPase in sarcoplasmic reticulum by decreasing the apparent affinity of the ATPase for Ca(2+), thereby acting as a key regulator of skeletal muscle activity. Its high expression in adult skeletal muscle, suggests that it constitutes the predominant regulator of ATP2A1/SERCA1 in adult skeletal muscle. Also inhibits the activity of ATP2A2/SERCA2 and ATP2A3/SERCA3. In Homo sapiens (Human), this protein is Myoregulin.